Here is a 93-residue protein sequence, read N- to C-terminus: Pyrimidine/purine nucleoside phosphorylase (93 aa).

Belongs to the nucleoside phosphorylase PpnP family.

The catalysed reaction is a purine D-ribonucleoside + phosphate = a purine nucleobase + alpha-D-ribose 1-phosphate. It carries out the reaction adenosine + phosphate = alpha-D-ribose 1-phosphate + adenine. The enzyme catalyses cytidine + phosphate = cytosine + alpha-D-ribose 1-phosphate. It catalyses the reaction guanosine + phosphate = alpha-D-ribose 1-phosphate + guanine. The catalysed reaction is inosine + phosphate = alpha-D-ribose 1-phosphate + hypoxanthine. It carries out the reaction thymidine + phosphate = 2-deoxy-alpha-D-ribose 1-phosphate + thymine. The enzyme catalyses uridine + phosphate = alpha-D-ribose 1-phosphate + uracil. It catalyses the reaction xanthosine + phosphate = alpha-D-ribose 1-phosphate + xanthine. Functionally, catalyzes the phosphorolysis of diverse nucleosides, yielding D-ribose 1-phosphate and the respective free bases. Can use uridine, adenosine, guanosine, cytidine, thymidine, inosine and xanthosine as substrates. Also catalyzes the reverse reactions. The polypeptide is Pyrimidine/purine nucleoside phosphorylase (Vibrio atlanticus (strain LGP32) (Vibrio splendidus (strain Mel32))).